Reading from the N-terminus, the 160-residue chain is uncharacterized protein (160 aa).

The N-acetyltransferase domain occupies 7-151 (LLINYKTLEE…NPLIWHPDMD (145 aa)).

This is an uncharacterized protein from Bacillus subtilis (strain 168).